Consider the following 295-residue polypeptide: F-box protein SKIP24 (295 aa).

In terms of domain architecture, F-box; degenerate spans 19 to 66; that stretch reads VKSSTFSYKDLCCISISSRRLFRLSCDDSLWDLLLVHDFPNHIVSASS. 2 coiled-coil regions span residues 82–129 and 167–209; these read REKE…SSLQ and EGRL…ESMK. The interval 217–245 is disordered; that stretch reads KSIRNGDQGSNGKTKKLKTSINYSGDQVS. Polar residues predominate over residues 235–245; sequence TSINYSGDQVS.

As to quaternary structure, part of a SCF (ASK-cullin-F-box) protein ligase complex. Interacts with SKP1A/ASK1 and SPK1B/ASK2.

Its pathway is protein modification; protein ubiquitination. Functionally, component of SCF(ASK-cullin-F-box) E3 ubiquitin ligase complexes, which may mediate the ubiquitination and subsequent proteasomal degradation of target proteins. This Arabidopsis thaliana (Mouse-ear cress) protein is F-box protein SKIP24 (SKIP24).